A 938-amino-acid polypeptide reads, in one-letter code: Probable outer membrane protein pmp15 (938 aa).

The first 17 residues, 1–17, serve as a signal peptide directing secretion; that stretch reads MRFFCFGMLLPFTFVLA. The Autotransporter domain occupies 659–938; the sequence is DEEKGHAASL…YLNVASRMRF (280 aa).

Belongs to the PMP outer membrane protein family.

It is found in the secreted. The protein resides in the cell wall. The protein localises to the cell outer membrane. The chain is Probable outer membrane protein pmp15 (pmp15) from Chlamydia pneumoniae (Chlamydophila pneumoniae).